A 189-amino-acid chain; its full sequence is Probable nicotinate-nucleotide adenylyltransferase (189 aa).

This sequence belongs to the NadD family.

It carries out the reaction nicotinate beta-D-ribonucleotide + ATP + H(+) = deamido-NAD(+) + diphosphate. It functions in the pathway cofactor biosynthesis; NAD(+) biosynthesis; deamido-NAD(+) from nicotinate D-ribonucleotide: step 1/1. Catalyzes the reversible adenylation of nicotinate mononucleotide (NaMN) to nicotinic acid adenine dinucleotide (NaAD). The polypeptide is Probable nicotinate-nucleotide adenylyltransferase (Cereibacter sphaeroides (strain ATCC 17023 / DSM 158 / JCM 6121 / CCUG 31486 / LMG 2827 / NBRC 12203 / NCIMB 8253 / ATH 2.4.1.) (Rhodobacter sphaeroides)).